Consider the following 908-residue polypeptide: Glutamate receptor ionotropic, kainate 2 (908 aa).

Positions 1–31 are cleaved as a signal peptide; the sequence is MKIIFPILSNPVFRRTVKLLLCLLWIGYSQG. Residues 32–561 are Extracellular-facing; sequence TTHVLRFGGI…VFSFLNPLSP (530 aa). 7 N-linked (GlcNAc...) asparagine glycosylation sites follow: asparagine 67, asparagine 73, asparagine 275, asparagine 378, asparagine 412, asparagine 423, and asparagine 430. An intrachain disulfide couples cysteine 96 to cysteine 347. The L-glutamate site is built by proline 516, alanine 518, and arginine 523. N-linked (GlcNAc...) asparagine glycosylation is present at asparagine 546. The chain crosses the membrane as a helical span at residues 562 to 582; it reads DIWMYILLAYLGVSCVLFVIA. Residues 583-635 are Cytoplasmic-facing; the sequence is RFSPYEWYNPHPCNPDSDVVENNFTLLNSFWFGVGALMQQGSELMPKALSTRI. Residues 636-656 form a helical membrane-spanning segment; the sequence is VGGIWWFFTLIIISSYTANLA. The Extracellular segment spans residues 657–819; that stretch reads AFLTVERMES…KEASALGVQN (163 aa). The L-glutamate site is built by alanine 689, threonine 690, and glutamate 738. The cysteines at positions 750 and 804 are disulfide-linked. Asparagine 751 carries an N-linked (GlcNAc...) asparagine glycan. The chain crosses the membrane as a helical span at residues 820 to 840; the sequence is IGGIFIVLAAGLVLSVFVAVG. Residues 841-908 are Cytoplasmic-facing; that stretch reads EFLYKSKKNA…RRLPGKETMA (68 aa). A phosphoserine; by PKC mark is found at serine 846 and serine 868. Lysine 886 is covalently cross-linked (Glycyl lysine isopeptide (Lys-Gly) (interchain with G-Cter in SUMO1)).

It belongs to the glutamate-gated ion channel (TC 1.A.10.1) family. GRIK2 subfamily. As to quaternary structure, homotetramer and heterotetramer with GRIK5. Tetramers may be formed by the dimerization of dimers. Assembles into a kainate-gated homomeric channel that does not bind AMPA. Can form functional heteromeric receptors with GRIK5. Can form functional heteromeric receptors with GRIK3 and GRIK4. Interacts with DLG4. Interacts with NETO2. Interacts (via C-terminus) with KLHL17 (via kelch repeats); the interaction targets GRIK2 for degradation via ubiquitin-proteasome pathway. In terms of processing, sumoylation mediates kainate receptor-mediated endocytosis and regulates synaptic transmission. Sumoylation is enhanced by PIAS3 and desumoylated by SENP1. Post-translationally, ubiquitinated. Ubiquitination regulates the GRIK2 levels at the synapse by leading kainate receptor degradation through proteasome. Phosphorylated by PKC at Ser-868 upon agonist activation, this directly enhance sumoylation. In terms of tissue distribution, expression is higher in cerebellum than in cerebral cortex.

It localises to the cell membrane. The protein localises to the postsynaptic cell membrane. The enzyme catalyses Ca(2+)(in) = Ca(2+)(out). The catalysed reaction is Na(+)(in) = Na(+)(out). Its activity is regulated as follows. Cold receptor activity activated by temperatures between 10-19 degrees Celsius. Its function is as follows. Ionotropic glutamate receptor that functions as a cation permeable ligand-gated ion channel, gated by L-glutamate and the glutamatergic agonist kainic acid. L-glutamate acts as an excitatory neurotransmitter at many synapses in the central nervous system. Binding of the excitatory neurotransmitter L-glutamate induces a conformation change, leading to the opening of the cation channel, and thereby converts the chemical signal to an electrical impulse. The receptor then desensitizes rapidly and enters a transient inactive state, characterized by the presence of bound agonist. Modulates cell surface expression of NETO2. In association with GRIK3, involved in presynaptic facilitation of glutamate release at hippocampal mossy fiber synapses. In terms of biological role, independent of its ionotropic glutamate receptor activity, acts as a thermoreceptor conferring sensitivity to cold temperatures. Functions in dorsal root ganglion neurons. The polypeptide is Glutamate receptor ionotropic, kainate 2 (GRIK2) (Homo sapiens (Human)).